The primary structure comprises 308 residues: Putative cathepsin L 3 (308 aa).

The first 21 residues, 1–21 (MKQFLTAAIVTLLMTAGYYHL), serve as a signal peptide directing secretion. Residues 22–110 (QEDDTNDFER…GASLPEVQLE (89 aa)) constitute a propeptide, activation peptide. Intrachain disulfides connect C129-C170 and C254-C298. Residues H261 and N278 contribute to the active site.

The protein belongs to the peptidase C1 family.

Its subcellular location is the secreted. It catalyses the reaction Specificity close to that of papain. As compared to cathepsin B, cathepsin L exhibits higher activity toward protein substrates, but has little activity on Z-Arg-Arg-NHMec, and no peptidyl-dipeptidase activity.. Functionally, may be involved in extracellular digestion. This chain is Putative cathepsin L 3, found in Paramecium tetraurelia.